The chain runs to 303 residues: Glycosyltransferase AglJ (303 aa).

A run of 2 helical transmembrane segments spans residues 230 to 250 (FYFGSVGFASTATGLGLALYV) and 263 to 283 (VIAVVSMAGILFGVQLLMFGV).

Belongs to the glycosyltransferase 2 family.

The protein resides in the cell membrane. Its pathway is cell surface structure biogenesis; S-layer biogenesis. Functionally, involved in the assembly of a N-linked pentasaccharide that decorates the S-layer glycoprotein and flagellins. Adds the first hexose subunit of the pentasaccharide to the dolichol phosphate carrier. In Haloferax volcanii (strain ATCC 29605 / DSM 3757 / JCM 8879 / NBRC 14742 / NCIMB 2012 / VKM B-1768 / DS2) (Halobacterium volcanii), this protein is Glycosyltransferase AglJ (aglJ).